The following is a 256-amino-acid chain: MSDSKEPRAQPLGLLEEEELITSSMNFFPRDFGFRQTRGYKSLAGCLGHAPLVLPLLFFTLFTGLLVAILVQVSKNPSSQRLDQSKQDEISQDLSQLKAAVERLCRPCPWEWTFFQGNCYFISNSQRNWHDSITACQEVGAQLVVIKSAEEQNFLQLQSSRSNRFAWMGLSDLNQEDMWQWVDDSPLSTSFKQYWNRGEPNNIGEEDCVEFNGNGWNDDKCSAAKFWICKKSAASCSRDEGQLLSSASASPIAHAA.

Over 1–50 the chain is Cytoplasmic; sequence MSDSKEPRAQPLGLLEEEELITSSMNFFPRDFGFRQTRGYKSLAGCLGHA. Positions 14 to 15 match the Endocytosis signal motif; sequence LL. A helical; Signal-anchor for type II membrane protein transmembrane segment spans residues 51 to 71; that stretch reads PLVLPLLFFTLFTGLLVAILV. Over 72-240 the chain is Extracellular; that stretch reads QVSKNPSSQR…KSAASCSRDE (169 aa). Cystine bridges form between Cys108-Cys119, Cys136-Cys229, and Cys208-Cys221. A C-type lectin domain is found at 114–230; that stretch reads FFQGNCYFIS…CSAAKFWICK (117 aa). The Ca(2+) site is built by Glu199, Asn201, Ile203, Glu206, Asn217, and Asp218.

Predominantly expressed in liver and axillary lymph nodes. At very low levels also found in other tissues.

It localises to the membrane. Probable pathogen-recognition receptor involved in peripheral immune surveillance in liver. May mediate the endocytosis of pathogens which are subsequently degraded in lysosomal compartments. Probably recognizes in a calcium-dependent manner high mannose N-linked oligosaccharides in a variety of pathogen antigens. Is a receptor for ICAM3, probably by binding to mannose-like carbohydrates. In Macaca mulatta (Rhesus macaque), this protein is CD209 antigen-like protein 2 (CD209L2).